The chain runs to 286 residues: Large ribosomal subunit protein uL4m (286 aa).

Residues 1–26 (MTIKRNLVKTLQSIRYQATTATAHAE) constitute a mitochondrion transit peptide. The tract at residues 85-132 (RRVGASNPPGRSENGFSRRKLMPQKGSGRARVGDANSPTRHNGGRALA) is disordered.

The protein belongs to the universal ribosomal protein uL4 family. Component of the mitochondrial large ribosomal subunit (mt-LSU). Mature yeast 74S mitochondrial ribosomes consist of a small (37S) and a large (54S) subunit. The 37S small subunit contains a 15S ribosomal RNA (15S mt-rRNA) and 34 different proteins. The 54S large subunit contains a 21S rRNA (21S mt-rRNA) and 46 different proteins.

Its subcellular location is the mitochondrion. Component of the mitochondrial ribosome (mitoribosome), a dedicated translation machinery responsible for the synthesis of mitochondrial genome-encoded proteins, including at least some of the essential transmembrane subunits of the mitochondrial respiratory chain. The mitoribosomes are attached to the mitochondrial inner membrane and translation products are cotranslationally integrated into the membrane. In Saccharomyces cerevisiae (strain ATCC 204508 / S288c) (Baker's yeast), this protein is Large ribosomal subunit protein uL4m (YML6).